A 141-amino-acid chain; its full sequence is Large ribosomal subunit protein uL13 (141 aa).

The protein belongs to the universal ribosomal protein uL13 family. In terms of assembly, part of the 50S ribosomal subunit.

Functionally, this protein is one of the early assembly proteins of the 50S ribosomal subunit, although it is not seen to bind rRNA by itself. It is important during the early stages of 50S assembly. The polypeptide is Large ribosomal subunit protein uL13 (Helicobacter pylori (strain G27)).